The following is a 323-amino-acid chain: MSVTLQRTEANGDGASPFVELDRQTWSRLAAQMEQPLNEEDIFRLRGLGDPLDMKEVREVYLPLSRLLHLYVEASHQLHAATTTFLGEQTQRTPFVIGVAGSVAVGKSTIARVLREMLRRWPGTPNVELITTDGFLYPLAELKRRHLLERKGFPESYDRRGLLRFVSEVKGGAEEVRAPWYSHVTYDIVPGKEVVVRRPDVLIVEGLNVLAPARPRMDGKQGLAVSDFFDFSIYVDAKTSYIEEWYVDRFRKLRTTAFAQPESYFHRYATLSDDDAESTARGIWKRINEPNLEENVLPTRGRAQLVLTKDADHSIRRMLLRKV.

An ATP-binding site is contributed by 101–108; that stretch reads GSVAVGKS.

Belongs to the prokaryotic pantothenate kinase family.

It localises to the cytoplasm. The enzyme catalyses (R)-pantothenate + ATP = (R)-4'-phosphopantothenate + ADP + H(+). The protein operates within cofactor biosynthesis; coenzyme A biosynthesis; CoA from (R)-pantothenate: step 1/5. In Paenarthrobacter aurescens (strain TC1), this protein is Pantothenate kinase.